Consider the following 226-residue polypeptide: UPF0173 metal-dependent hydrolase Fnod_0635 (226 aa).

The protein belongs to the UPF0173 family.

The polypeptide is UPF0173 metal-dependent hydrolase Fnod_0635 (Fervidobacterium nodosum (strain ATCC 35602 / DSM 5306 / Rt17-B1)).